Consider the following 272-residue polypeptide: 2-amino-3,7-dideoxy-D-threo-hept-6-ulosonate synthase (272 aa).

Aspartate 33 serves as the catalytic Proton acceptor. 1-deoxy-D-threo-hexo-2,5-diulose 6-phosphate is bound by residues 33-37 and 153-155; these read DHGVS and YPR. The Proton donor role is filled by tyrosine 153. Catalysis depends on lysine 184, which acts as the Schiff-base intermediate with substrate. Residues 209-210 and 237-238 each bind 1-deoxy-D-threo-hexo-2,5-diulose 6-phosphate; these read GG and GR.

This sequence belongs to the DeoC/FbaB aldolase family. ADHS subfamily. As to quaternary structure, homodecamer.

The catalysed reaction is 1-deoxy-D-threo-hexo-2,5-diulose 6-phosphate + L-aspartate 4-semialdehyde = 2,3-dioxopropyl phosphate + 2-amino-2,3,7-trideoxy-D-lyxo-hept-6-ulosonate. Catalyzes a transaldol reaction between 6-deoxy-5-ketofructose 1-phosphate (DKFP) and L-aspartate semialdehyde (ASA) with an elimination of hydroxypyruvaldehyde phosphate to yield 2-amino-3,7-dideoxy-D-threo-hept-6-ulosonate (ADH). Plays a key role in an alternative pathway of the biosynthesis of 3-dehydroquinate (DHQ), which is involved in the canonical pathway for the biosynthesis of aromatic amino acids. This chain is 2-amino-3,7-dideoxy-D-threo-hept-6-ulosonate synthase, found in Methanococcus maripaludis (strain C7 / ATCC BAA-1331).